Here is a 427-residue protein sequence, read N- to C-terminus: Pectin acetylesterase 5 (427 aa).

The N-terminal stretch at 1–35 (MAIPRFSSLLRCRKWAKSDWLVASIGCVLIVFFLS) is a signal peptide. Asn-173 carries an N-linked (GlcNAc...) asparagine glycan. Active-site charge relay system residues include Ser-209, Asp-305, and His-372. Asn-391 carries an N-linked (GlcNAc...) asparagine glycan.

Belongs to the pectinacetylesterase family.

It is found in the secreted. The protein resides in the cell wall. Its function is as follows. Hydrolyzes acetyl esters in homogalacturonan regions of pectin. In type I primary cell wall, galacturonic acid residues of pectin can be acetylated at the O-2 and O-3 positions. Decreasing the degree of acetylation of pectin gels in vitro alters their physical properties. In Arabidopsis thaliana (Mouse-ear cress), this protein is Pectin acetylesterase 5.